The chain runs to 272 residues: Cerberus (272 aa).

Positions 1–19 (MSLLLLQLLVLSCLGDTEP) are cleaved as a signal peptide. 4 disulfides stabilise this stretch: Cys168-Cys215, Cys182-Cys229, Cys192-Cys245, and Cys196-Cys247. Residues 168–253 (CRTLPFSQSV…ECNCETQKIE (86 aa)) form the CTCK domain. An N-linked (GlcNAc...) asparagine glycan is attached at Asn228.

This sequence belongs to the DAN family.

Its subcellular location is the secreted. Its function is as follows. Cytokine that acts as a regulator of the activity of Nodal/BMP pathways during the establishment of bilateral asymmetry in the head and trunk of the embryo. In Gallus gallus (Chicken), this protein is Cerberus (CER1).